Consider the following 60-residue polypeptide: Large ribosomal subunit protein uL29 (60 aa).

Belongs to the universal ribosomal protein uL29 family.

The protein is Large ribosomal subunit protein uL29 of Fusobacterium nucleatum subsp. nucleatum (strain ATCC 25586 / DSM 15643 / BCRC 10681 / CIP 101130 / JCM 8532 / KCTC 2640 / LMG 13131 / VPI 4355).